We begin with the raw amino-acid sequence, 373 residues long: Homoserine O-acetyltransferase (373 aa).

Residues 52-356 (NVVMVLHALT…VYGHDGFLVE (305 aa)) enclose the AB hydrolase-1 domain. S157 serves as the catalytic Nucleophile. Residue R227 participates in substrate binding. Catalysis depends on residues D320 and H350. Residue D351 participates in substrate binding.

The protein belongs to the AB hydrolase superfamily. MetX family. As to quaternary structure, homodimer.

It is found in the cytoplasm. It catalyses the reaction L-homoserine + acetyl-CoA = O-acetyl-L-homoserine + CoA. It functions in the pathway amino-acid biosynthesis; L-methionine biosynthesis via de novo pathway; O-acetyl-L-homoserine from L-homoserine: step 1/1. Functionally, transfers an acetyl group from acetyl-CoA to L-homoserine, forming acetyl-L-homoserine. This Mycobacterium sp. (strain KMS) protein is Homoserine O-acetyltransferase.